Reading from the N-terminus, the 308-residue chain is HTH-type transcriptional activator AllS (308 aa).

Residues 2-59 form the HTH lysR-type domain; sequence FDPETLRTFISVAETGSFSKAAERLCKTTATTSYRIKLLEENTGVGLFFRTTRSVSLT. Positions 19–38 form a DNA-binding region, H-T-H motif; sequence FSKAAERLCKTTATTSYRIK.

The protein belongs to the LysR transcriptional regulatory family.

Its function is as follows. Positive regulator essential for the expression of allD operon. Binds to the allD promoter. This is HTH-type transcriptional activator AllS (allS) from Salmonella typhi.